A 211-amino-acid chain; its full sequence is Protein-L-isoaspartate O-methyltransferase (211 aa).

Residue S59 is part of the active site.

Belongs to the methyltransferase superfamily. L-isoaspartyl/D-aspartyl protein methyltransferase family.

The protein resides in the cytoplasm. The enzyme catalyses [protein]-L-isoaspartate + S-adenosyl-L-methionine = [protein]-L-isoaspartate alpha-methyl ester + S-adenosyl-L-homocysteine. Functionally, catalyzes the methyl esterification of L-isoaspartyl residues in peptides and proteins that result from spontaneous decomposition of normal L-aspartyl and L-asparaginyl residues. It plays a role in the repair and/or degradation of damaged proteins. In Ignicoccus hospitalis (strain KIN4/I / DSM 18386 / JCM 14125), this protein is Protein-L-isoaspartate O-methyltransferase.